A 476-amino-acid polypeptide reads, in one-letter code: Membrane-bound lytic murein transglycosylase F (476 aa).

A signal peptide spans 1-15 (MRSFLLILFCVSLLT). Residues 16–258 (GCQGERVDAA…HLNEKYFAHV (243 aa)) are non-LT domain. Residues 259–476 (KRFDYVDTRA…QSEISAAQPN (218 aa)) form an LT domain region. Glu303 is a catalytic residue. Positions 456–476 (EAQQQTAEKQSQSEISAAQPN) are disordered.

This sequence in the N-terminal section; belongs to the bacterial solute-binding protein 3 family. It in the C-terminal section; belongs to the transglycosylase Slt family.

It is found in the cell outer membrane. It carries out the reaction Exolytic cleavage of the (1-&gt;4)-beta-glycosidic linkage between N-acetylmuramic acid (MurNAc) and N-acetylglucosamine (GlcNAc) residues in peptidoglycan, from either the reducing or the non-reducing ends of the peptidoglycan chains, with concomitant formation of a 1,6-anhydrobond in the MurNAc residue.. Its function is as follows. Murein-degrading enzyme that degrades murein glycan strands and insoluble, high-molecular weight murein sacculi, with the concomitant formation of a 1,6-anhydromuramoyl product. Lytic transglycosylases (LTs) play an integral role in the metabolism of the peptidoglycan (PG) sacculus. Their lytic action creates space within the PG sacculus to allow for its expansion as well as for the insertion of various structures such as secretion systems and flagella. This is Membrane-bound lytic murein transglycosylase F from Shewanella loihica (strain ATCC BAA-1088 / PV-4).